Consider the following 181-residue polypeptide: Large ribosomal subunit protein uL5 (181 aa).

Belongs to the universal ribosomal protein uL5 family. In terms of assembly, part of the 50S ribosomal subunit; part of the 5S rRNA/L5/L18/L25 subcomplex. Contacts the 5S rRNA and the P site tRNA. Forms a bridge to the 30S subunit in the 70S ribosome.

Its function is as follows. This is one of the proteins that bind and probably mediate the attachment of the 5S RNA into the large ribosomal subunit, where it forms part of the central protuberance. In the 70S ribosome it contacts protein S13 of the 30S subunit (bridge B1b), connecting the 2 subunits; this bridge is implicated in subunit movement. Contacts the P site tRNA; the 5S rRNA and some of its associated proteins might help stabilize positioning of ribosome-bound tRNAs. The chain is Large ribosomal subunit protein uL5 from Helicobacter pylori (strain P12).